The chain runs to 456 residues: Exodeoxyribonuclease 7 large subunit (456 aa).

It belongs to the XseA family. As to quaternary structure, heterooligomer composed of large and small subunits.

It localises to the cytoplasm. The catalysed reaction is Exonucleolytic cleavage in either 5'- to 3'- or 3'- to 5'-direction to yield nucleoside 5'-phosphates.. Bidirectionally degrades single-stranded DNA into large acid-insoluble oligonucleotides, which are then degraded further into small acid-soluble oligonucleotides. The polypeptide is Exodeoxyribonuclease 7 large subunit (Lactobacillus delbrueckii subsp. bulgaricus (strain ATCC 11842 / DSM 20081 / BCRC 10696 / JCM 1002 / NBRC 13953 / NCIMB 11778 / NCTC 12712 / WDCM 00102 / Lb 14)).